The following is a 446-amino-acid chain: Phosphoglucosamine mutase (446 aa).

Serine 104 functions as the Phosphoserine intermediate in the catalytic mechanism. 4 residues coordinate Mg(2+): serine 104, aspartate 241, aspartate 243, and aspartate 245. At serine 104 the chain carries Phosphoserine.

Belongs to the phosphohexose mutase family. Requires Mg(2+) as cofactor. Activated by phosphorylation.

The catalysed reaction is alpha-D-glucosamine 1-phosphate = D-glucosamine 6-phosphate. In terms of biological role, catalyzes the conversion of glucosamine-6-phosphate to glucosamine-1-phosphate. The chain is Phosphoglucosamine mutase from Teredinibacter turnerae (strain ATCC 39867 / T7901).